The sequence spans 1925 residues: Plexin-D1 (1925 aa).

The segment covering 1–21 has biased composition (low complexity); the sequence is MARRAAGGAPPSARAAAAVPL. The tract at residues 1 to 26 is disordered; the sequence is MARRAAGGAPPSARAAAAVPLRPRPH. An N-terminal signal peptide occupies residues 1-48; the sequence is MARRAAGGAPPSARAAAAVPLRPRPHSRGPGLLPLPLLLLLGAARAGA. One can recognise a Sema domain in the interval 49–548; sequence LEIQRRFPSP…TSHQMARVKV (500 aa). At 49–1271 the chain is on the extracellular side; the sequence is LEIQRRFPSP…TLQLGGSETA (1223 aa). Intrachain disulfides connect C106-C116 and C142-C150. N-linked (GlcNAc...) asparagine glycans are attached at residues N157 and N226. 2 cysteine pairs are disulfide-bonded: C324–C447 and C347–C391. N483 carries an N-linked (GlcNAc...) asparagine glycan. 5 cysteine pairs are disulfide-bonded: C551-C568, C557-C602, C560-C577, C571-C583, and C639-C663. IPT/TIG domains follow at residues 893–977, 983–1065, and 1071–1145; these read PEIR…SREQ, PTVH…NLTF, and PVIT…FING. An N-linked (GlcNAc...) asparagine glycan is attached at N967. N1120 carries N-linked (GlcNAc...) asparagine glycosylation. Residues 1272–1292 traverse the membrane as a helical segment; the sequence is IVVSIVICSVLLLLSVVALFV. Topologically, residues 1293-1925 are cytoplasmic; sequence FCTKSRRAER…NNIYECYSEA (633 aa).

The protein belongs to the plexin family. In terms of assembly, interacts with NRP1 and SEMA4A. Interacts with SH3BP1; they dissociate upon SEMA3E binding to PLXND1 allowing SH3BP1 to transduce downstream signal through RAC1 inactivation. As to expression, detected in embryonic heart and vascular endothelium, brain, dorsal root ganglia, adrenal gland, lung mesenchyme, small intestine and in the ossification centers of vertebral bodies.

It localises to the cell membrane. The protein localises to the cell projection. Its subcellular location is the lamellipodium membrane. Functionally, cell surface receptor for SEMA4A and for class 3 semaphorins, such as SEMA3A, SEMA3C and SEMA3E. Plays an important role in cell-cell signaling, and in regulating the migration of a wide spectrum of cell types. Regulates the migration of thymocytes in the medulla. Regulates endothelial cell migration. Plays an important role in ensuring the specificity of synapse formation. Mediates anti-angiogenic signaling in response to SEMA3E. Required for normal development of the heart and vasculature. This chain is Plexin-D1 (Plxnd1), found in Mus musculus (Mouse).